Reading from the N-terminus, the 876-residue chain is Xylosyltransferase oxt (876 aa).

Residues 1 to 14 (MEQSVSARWLKRYR) lie on the Cytoplasmic side of the membrane. Residues 15-35 (AFFLILLLIVAIQLFLAYKSL) form a helical; Signal-anchor for type II membrane protein membrane-spanning segment. Over 36 to 876 (DIVGGGSGSG…PKSDVDALLK (841 aa)) the chain is Lumenal. The tract at residues 48-67 (AAEAPASPPPPHAQARVQPP) is disordered. Cystine bridges form between cysteine 83–cysteine 111, cysteine 127–cysteine 465, cysteine 484–cysteine 497, and cysteine 486–cysteine 495. Residues asparagine 131 and asparagine 135 are each glycosylated (N-linked (GlcNAc...) asparagine). One can recognise a WSC domain in the interval 134–228 (ANVSLGCFKD…FYAMNIYETG (95 aa)). Residues aspartate 283 and 312-314 (TIW) each bind UDP-alpha-D-xylose. N-linked (GlcNAc...) asparagine glycosylation occurs at asparagine 342. Residue 415 to 416 (DW) participates in UDP-alpha-D-xylose binding. UDP-alpha-D-xylose-binding positions include serine 498 and 522–523 (RK). N-linked (GlcNAc...) asparagine glycosylation is found at asparagine 696 and asparagine 725. Cysteines 842 and 855 form a disulfide.

This sequence belongs to the glycosyltransferase 14 family. XylT subfamily. The cofactor is Ca(2+). Mn(2+) serves as cofactor. Mg(2+) is required as a cofactor.

It is found in the endoplasmic reticulum membrane. The protein localises to the golgi apparatus membrane. The enzyme catalyses UDP-alpha-D-xylose + L-seryl-[protein] = 3-O-(beta-D-xylosyl)-L-seryl-[protein] + UDP + H(+). Its pathway is glycan metabolism; chondroitin sulfate biosynthesis. It functions in the pathway glycan metabolism; heparan sulfate biosynthesis. Its function is as follows. Catalyzes the first step in biosynthesis of glycosaminoglycan. Transfers D-xylose from UDP-D-xylose to specific serine residues of the core protein. This chain is Xylosyltransferase oxt, found in Drosophila melanogaster (Fruit fly).